Consider the following 868-residue polypeptide: Probable inorganic carbon transporter subunit DabA (868 aa).

The Zn(2+) site is built by Cys392, Asp394, His574, and Cys589.

It belongs to the inorganic carbon transporter (TC 9.A.2) DabA family. Forms a complex with DabB. It depends on Zn(2+) as a cofactor.

The protein resides in the cell membrane. Its function is as follows. Part of an energy-coupled inorganic carbon pump. This Bacillus cereus (strain G9842) protein is Probable inorganic carbon transporter subunit DabA.